A 109-amino-acid polypeptide reads, in one-letter code: Nucleoid-associated protein ECA1177 (109 aa).

It belongs to the YbaB/EbfC family. As to quaternary structure, homodimer.

Its subcellular location is the cytoplasm. It is found in the nucleoid. Binds to DNA and alters its conformation. May be involved in regulation of gene expression, nucleoid organization and DNA protection. This is Nucleoid-associated protein ECA1177 from Pectobacterium atrosepticum (strain SCRI 1043 / ATCC BAA-672) (Erwinia carotovora subsp. atroseptica).